We begin with the raw amino-acid sequence, 138 residues long: Thyrotropin subunit beta (138 aa).

An N-terminal signal peptide occupies residues methionine 1–serine 20. Cystine bridges form between cysteine 22-cysteine 72, cysteine 36-cysteine 87, cysteine 39-cysteine 125, cysteine 47-cysteine 103, cysteine 51-cysteine 105, and cysteine 108-cysteine 115. A glycan (N-linked (GlcNAc...) asparagine) is linked at asparagine 43. Positions valine 133–isoleucine 138 are excised as a propeptide.

This sequence belongs to the glycoprotein hormones subunit beta family. Heterodimer of a common alpha chain and a unique beta chain which confers biological specificity to thyrotropin, lutropin, follitropin and gonadotropin.

The protein resides in the secreted. Its function is as follows. Indispensable for the control of thyroid structure and metabolism. This is Thyrotropin subunit beta (TSHB) from Equus caballus (Horse).